The chain runs to 415 residues: Ornithine cyclodeaminase (415 aa).

NAD(+) contacts are provided by N241, A242, D320, T352, L354, H355, D373, D396, and V397.

Belongs to the AgrE/ArgZ ornithine cyclodeaminase family. It depends on NAD(+) as a cofactor.

The catalysed reaction is L-ornithine = L-proline + NH4(+). Catalyzes the conversion of ornithine to proline, with the release of ammonia. The sequence is that of Ornithine cyclodeaminase from Methanococcus maripaludis (strain DSM 14266 / JCM 13030 / NBRC 101832 / S2 / LL).